Reading from the N-terminus, the 130-residue chain is Small ribosomal subunit protein uS9 (130 aa).

The disordered stretch occupies residues 106 to 130 (RDSRKVERKKPGLKKARKASQFSKR). The segment covering 111-130 (VERKKPGLKKARKASQFSKR) has biased composition (basic residues).

It belongs to the universal ribosomal protein uS9 family.

The polypeptide is Small ribosomal subunit protein uS9 (Streptococcus pneumoniae serotype 2 (strain D39 / NCTC 7466)).